The chain runs to 435 residues: Serine--tRNA ligase (435 aa).

234–236 (TAE) serves as a coordination point for L-serine. Position 265–267 (265–267 (RRE)) interacts with ATP. L-serine is bound at residue glutamate 288. 352 to 355 (EISS) serves as a coordination point for ATP. Residue serine 388 coordinates L-serine.

This sequence belongs to the class-II aminoacyl-tRNA synthetase family. Type-1 seryl-tRNA synthetase subfamily. In terms of assembly, homodimer. The tRNA molecule binds across the dimer.

The protein localises to the cytoplasm. The enzyme catalyses tRNA(Ser) + L-serine + ATP = L-seryl-tRNA(Ser) + AMP + diphosphate + H(+). The catalysed reaction is tRNA(Sec) + L-serine + ATP = L-seryl-tRNA(Sec) + AMP + diphosphate + H(+). The protein operates within aminoacyl-tRNA biosynthesis; selenocysteinyl-tRNA(Sec) biosynthesis; L-seryl-tRNA(Sec) from L-serine and tRNA(Sec): step 1/1. Catalyzes the attachment of serine to tRNA(Ser). Is also able to aminoacylate tRNA(Sec) with serine, to form the misacylated tRNA L-seryl-tRNA(Sec), which will be further converted into selenocysteinyl-tRNA(Sec). The chain is Serine--tRNA ligase from Synechococcus sp. (strain JA-3-3Ab) (Cyanobacteria bacterium Yellowstone A-Prime).